Here is an 87-residue protein sequence, read N- to C-terminus: MNSLLMITACLFLIGTVWAKEGYLVNKSTGCKYECFWLGKNEFCDKECKAKNQGGSYGYCYSFACWCEGLPESTSTYPLPNKSCGRK.

The signal sequence occupies residues M1 to A19. One can recognise an LCN-type CS-alpha/beta domain in the interval K20–G85. Intrachain disulfides connect C31/C84, C35/C60, C44/C65, and C48/C67. C84 is subject to Cysteine amide. Residues G85 to K87 constitute a propeptide that is removed on maturation.

It belongs to the long (4 C-C) scorpion toxin superfamily. Sodium channel inhibitor family. Beta subfamily. Expressed by the venom gland.

Its subcellular location is the secreted. Functionally, beta toxins bind voltage-independently at site-4 of sodium channels (Nav) and shift the voltage of activation toward more negative potentials thereby affecting sodium channel activation and promoting spontaneous and repetitive firing. In Centruroides exilicauda (Bark scorpion), this protein is Neurotoxin Cex4.